Consider the following 190-residue polypeptide: HTH-type transcriptional repressor AcnR (190 aa).

The HTH tetR-type domain maps to 10–70; sequence SMRRQEILEG…ALAREDAARM (61 aa). The segment at residues 33–52 is a DNA-binding region (H-T-H motif); sequence TVRRLEETVGKSRGAIFHHF. Residues 79 to 80, Arg-130, and Asn-134 each bind citrate; that span reads LV. Position 181 (Glu-181) interacts with Mg(2+). Arg-185 lines the citrate pocket.

In terms of assembly, homodimer.

AcnR negatively controls the expression of the aconitase gene acn. The sequence is that of HTH-type transcriptional repressor AcnR from Corynebacterium diphtheriae (strain ATCC 700971 / NCTC 13129 / Biotype gravis).